The chain runs to 1201 residues: DNA-directed RNA polymerase subunit beta (1201 aa).

The interval 1165-1201 (DALSKFKQQQDEKAADKAAKADAAKPSETTNAQQDNQ) is disordered. The segment covering 1172 to 1189 (QQQDEKAADKAAKADAAK) has biased composition (basic and acidic residues). Residues 1191–1201 (SETTNAQQDNQ) are compositionally biased toward polar residues.

It belongs to the RNA polymerase beta chain family. As to quaternary structure, the RNAP catalytic core consists of 2 alpha, 1 beta, 1 beta' and 1 omega subunit. When a sigma factor is associated with the core the holoenzyme is formed, which can initiate transcription.

It catalyses the reaction RNA(n) + a ribonucleoside 5'-triphosphate = RNA(n+1) + diphosphate. DNA-dependent RNA polymerase catalyzes the transcription of DNA into RNA using the four ribonucleoside triphosphates as substrates. This Lactiplantibacillus plantarum (strain ATCC BAA-793 / NCIMB 8826 / WCFS1) (Lactobacillus plantarum) protein is DNA-directed RNA polymerase subunit beta.